Reading from the N-terminus, the 406-residue chain is Cysteine desulfurase (406 aa).

K226 bears the N6-(pyridoxal phosphate)lysine mark. C364 acts as the Cysteine persulfide intermediate in catalysis.

It belongs to the class-V pyridoxal-phosphate-dependent aminotransferase family. Csd subfamily. Homodimer. Interacts with SufE and the SufBCD complex composed of SufB, SufC and SufD. The interaction with SufE is required to mediate the direct transfer of the sulfur atom from the S-sulfanylcysteine. Requires pyridoxal 5'-phosphate as cofactor.

The protein resides in the cytoplasm. The catalysed reaction is (sulfur carrier)-H + L-cysteine = (sulfur carrier)-SH + L-alanine. It carries out the reaction L-selenocysteine + AH2 = hydrogenselenide + L-alanine + A + H(+). It functions in the pathway cofactor biosynthesis; iron-sulfur cluster biosynthesis. Cysteine desulfurases mobilize the sulfur from L-cysteine to yield L-alanine, an essential step in sulfur metabolism for biosynthesis of a variety of sulfur-containing biomolecules. Component of the suf operon, which is activated and required under specific conditions such as oxidative stress and iron limitation. Acts as a potent selenocysteine lyase in vitro, that mobilizes selenium from L-selenocysteine. Selenocysteine lyase activity is however unsure in vivo. The protein is Cysteine desulfurase of Escherichia fergusonii (strain ATCC 35469 / DSM 13698 / CCUG 18766 / IAM 14443 / JCM 21226 / LMG 7866 / NBRC 102419 / NCTC 12128 / CDC 0568-73).